Here is a 515-residue protein sequence, read N- to C-terminus: Maturase K (515 aa).

Belongs to the intron maturase 2 family. MatK subfamily.

Its subcellular location is the plastid. The protein resides in the chloroplast. Functionally, usually encoded in the trnK tRNA gene intron. Probably assists in splicing its own and other chloroplast group II introns. The polypeptide is Maturase K (Picea sitchensis (Sitka spruce)).